A 573-amino-acid chain; its full sequence is Phosphoenolpyruvate-protein phosphotransferase (573 aa).

His-190 serves as the catalytic Tele-phosphohistidine intermediate. Phosphoenolpyruvate is bound by residues Arg-297 and Arg-333. Mg(2+) is bound by residues Glu-432 and Asp-456. Residues 455-456 and Arg-466 contribute to the phosphoenolpyruvate site; that span reads ND. The Proton donor role is filled by Cys-503.

The protein belongs to the PEP-utilizing enzyme family. As to quaternary structure, homodimer. Requires Mg(2+) as cofactor.

It is found in the cytoplasm. The enzyme catalyses L-histidyl-[protein] + phosphoenolpyruvate = N(pros)-phospho-L-histidyl-[protein] + pyruvate. Its function is as follows. General (non sugar-specific) component of the phosphoenolpyruvate-dependent sugar phosphotransferase system (sugar PTS). This major carbohydrate active-transport system catalyzes the phosphorylation of incoming sugar substrates concomitantly with their translocation across the cell membrane. Enzyme I transfers the phosphoryl group from phosphoenolpyruvate (PEP) to the phosphoryl carrier protein (HPr). This chain is Phosphoenolpyruvate-protein phosphotransferase (ptsI), found in Priestia megaterium (Bacillus megaterium).